The sequence spans 107 residues: Circadian clock oscillator protein KaiB (107 aa).

The protein belongs to the KaiB family. As to quaternary structure, may undergo a major conformational rearrangment; in the free state forms homooligomers. When bound to KaiC switches to a monomeric thioredoxin-fold (KaiB(fs)). The active oscillator complex is probably KaiC(6):KaiB(6).

Component of the KaiBC clock protein complex, which constitutes the main circadian regulator in cyanobacteria; it may modify the ATPase activity of KaiC. Its function is as follows. May be a metamorphic protein which reversibly switches between an inactive tetrameric fold and a rare, thioredoxin-like monomeric fold (KaiB(fs)). KaiB(fs) binds phospho-KaiC, and perhaps clock output effectors. The sequence is that of Circadian clock oscillator protein KaiB from Prochlorococcus marinus (strain NATL2A).